A 59-amino-acid polypeptide reads, in one-letter code: Transcription elongation factor Spt4 (59 aa).

The Zn(2+) site is built by Cys4, Cys7, Cys16, and Cys19.

This sequence belongs to the archaeal Spt4 family. In terms of assembly, heterodimer composed of Spt4 and Spt5.

Its function is as follows. Stimulates transcription elongation. This Methanocaldococcus jannaschii (strain ATCC 43067 / DSM 2661 / JAL-1 / JCM 10045 / NBRC 100440) (Methanococcus jannaschii) protein is Transcription elongation factor Spt4.